The following is a 114-amino-acid chain: As-peptide 126 (114 aa).

The first 22 residues, 1-22, serve as a signal peptide directing secretion; that stretch reads MSRALICSLALLAMLVISGTYA. 9 repeat units span residues 22-29, 30-37, 38-45, 46-53, 54-61, 62-69, 70-77, 78-85, and 86-93. The segment at 22 to 93 is 9 X 8 AA approximate tandem repeats of [AP]-[ILS]-[AP]-A-A-N-A-[DE]; sequence ASPAANAEAL…AEPLAAANAE (72 aa). A propeptide spanning residues 23–104 is cleaved from the precursor; the sequence is SPAANAEALA…SAGPSPLAAA (82 aa). The span at 82–96 shows a compositional bias: low complexity; sequence ANAEPLAAANAEPSA. Residues 82 to 114 are disordered; sequence ANAEPLAAANAEPSAGPSPLAAAQDPPVVKMKG. Q105 carries the post-translational modification Pyrrolidone carboxylic acid. A Lysine amide modification is found at K113.

As to expression, expressed by the venom gland.

Its subcellular location is the secreted. This Anoplius samariensis (Solitary wasp) protein is As-peptide 126.